A 223-amino-acid chain; its full sequence is Protein UGX2 (223 aa).

Residues 78-95 (SNKRAKMKSKTKLTRTAK) show a composition bias toward basic residues. The tract at residues 78-117 (SNKRAKMKSKTKLTRTAKQRRESPVCERDESDEDNDSDHY) is disordered. A compositionally biased stretch (basic and acidic residues) spans 96–105 (QRRESPVCER).

The sequence is that of Protein UGX2 (UGX2) from Saccharomyces cerevisiae (strain ATCC 204508 / S288c) (Baker's yeast).